We begin with the raw amino-acid sequence, 84 residues long: Defensin-like protein 199 (84 aa).

Positions 1 to 24 (MAITMRTLVAFVFTIFFIISFVHS) are cleaved as a signal peptide. 4 disulfide bridges follow: Cys40/Cys80, Cys47/Cys72, Cys56/Cys78, and Cys60/Cys79.

It belongs to the DEFL family.

Its subcellular location is the secreted. The polypeptide is Defensin-like protein 199 (Arabidopsis thaliana (Mouse-ear cress)).